The following is a 418-amino-acid chain: F-box protein At5g03970 (418 aa).

The region spanning 18 to 66 (STHEVLNSNDTMCEILILLPPETIYKLILVSKRWLEIIASPCFRHTYLA) is the F-box domain.

The polypeptide is F-box protein At5g03970 (Arabidopsis thaliana (Mouse-ear cress)).